The chain runs to 229 residues: Imidazoleglycerol-phosphate dehydratase (229 aa).

The protein belongs to the imidazoleglycerol-phosphate dehydratase family.

It catalyses the reaction D-erythro-1-(imidazol-4-yl)glycerol 3-phosphate = 3-(imidazol-4-yl)-2-oxopropyl phosphate + H2O. Its pathway is amino-acid biosynthesis; L-histidine biosynthesis; L-histidine from 5-phospho-alpha-D-ribose 1-diphosphate: step 6/9. This is Imidazoleglycerol-phosphate dehydratase from Neurospora crassa (strain ATCC 24698 / 74-OR23-1A / CBS 708.71 / DSM 1257 / FGSC 987).